The sequence spans 290 residues: HTH-type transcriptional regulator BudR (290 aa).

The HTH lysR-type domain maps to 1–58 (MELRYLRYFVAVAEARNFTRAAHDLGISQPPLSQQIQRLEREIGTPLLRRLTRGVELT). The H-T-H motif DNA-binding region spans 18-37 (FTRAAHDLGISQPPLSQQIQ).

Belongs to the LysR transcriptional regulatory family.

Its function is as follows. Regulator of the budABC operon for 2,3-butanediol synthesis. In Raoultella terrigena (Klebsiella terrigena), this protein is HTH-type transcriptional regulator BudR (budR).